Here is a 159-residue protein sequence, read N- to C-terminus: Ribosomal RNA large subunit methyltransferase H (159 aa).

S-adenosyl-L-methionine-binding positions include leucine 76, glycine 108, and 127 to 132; that span reads LSDMTF.

It belongs to the RNA methyltransferase RlmH family. As to quaternary structure, homodimer.

The protein resides in the cytoplasm. The catalysed reaction is pseudouridine(1915) in 23S rRNA + S-adenosyl-L-methionine = N(3)-methylpseudouridine(1915) in 23S rRNA + S-adenosyl-L-homocysteine + H(+). In terms of biological role, specifically methylates the pseudouridine at position 1915 (m3Psi1915) in 23S rRNA. The sequence is that of Ribosomal RNA large subunit methyltransferase H from Acetivibrio thermocellus (strain ATCC 27405 / DSM 1237 / JCM 9322 / NBRC 103400 / NCIMB 10682 / NRRL B-4536 / VPI 7372) (Clostridium thermocellum).